A 324-amino-acid chain; its full sequence is Lactonase drp35 (324 aa).

Ca(2+) is bound by residues glutamate 47, serine 109, glycine 111, aspartate 129, threonine 132, tyrosine 134, aspartate 137, asparagine 184, aspartate 235, and serine 236. Catalysis depends on aspartate 235, which acts as the Proton donor.

The protein belongs to the SMP-30/CGR1 family. Ca(2+) serves as cofactor.

It is found in the cytoplasm. Its function is as follows. Exhibits lactonase activity. Acts in cells with perturbed membrane integrity and is possibly related to the membrane homeostasis. The sequence is that of Lactonase drp35 (drp35) from Staphylococcus aureus (strain MRSA252).